Here is a 481-residue protein sequence, read N- to C-terminus: UDP-N-acetylmuramoylalanine--D-glutamate ligase (481 aa).

Position 108–114 (108–114 (GTNGKTS)) interacts with ATP.

The protein belongs to the MurCDEF family.

Its subcellular location is the cytoplasm. It carries out the reaction UDP-N-acetyl-alpha-D-muramoyl-L-alanine + D-glutamate + ATP = UDP-N-acetyl-alpha-D-muramoyl-L-alanyl-D-glutamate + ADP + phosphate + H(+). It functions in the pathway cell wall biogenesis; peptidoglycan biosynthesis. Functionally, cell wall formation. Catalyzes the addition of glutamate to the nucleotide precursor UDP-N-acetylmuramoyl-L-alanine (UMA). In Bifidobacterium longum (strain DJO10A), this protein is UDP-N-acetylmuramoylalanine--D-glutamate ligase.